A 58-amino-acid chain; its full sequence is Conotoxin TxXIIIA (58 aa).

The first 22 residues, 1–22 (MRCLPVFVILLLLIASVPSVDA), serve as a signal peptide directing secretion. A propeptide spanning residues 23–46 (ELKAKDDMPQASFHDNAERDQQKK) is cleaved from the precursor.

As to quaternary structure, homodimer; disulfide-linked. In terms of processing, 5 disulfide bonds are present in each homodimer: two intrachain disulfide bonds per subunit, and one interchain disulfide bond linking the two subunits. As to expression, expressed by the venom duct.

The protein localises to the secreted. The protein is Conotoxin TxXIIIA of Conus textile (Cloth-of-gold cone).